The chain runs to 475 residues: ATP synthase subunit beta, chloroplastic (475 aa).

Residue 155–162 coordinates ATP; sequence GGAGVGKT.

Belongs to the ATPase alpha/beta chains family. As to quaternary structure, F-type ATPases have 2 components, CF(1) - the catalytic core - and CF(0) - the membrane proton channel. CF(1) has five subunits: alpha(3), beta(3), gamma(1), delta(1), epsilon(1). CF(0) has four main subunits: a(1), b(1), b'(1) and c(9-12).

It is found in the plastid. The protein localises to the chloroplast thylakoid membrane. The enzyme catalyses ATP + H2O + 4 H(+)(in) = ADP + phosphate + 5 H(+)(out). In terms of biological role, produces ATP from ADP in the presence of a proton gradient across the membrane. The catalytic sites are hosted primarily by the beta subunits. This Porphyra purpurea (Red seaweed) protein is ATP synthase subunit beta, chloroplastic.